Here is a 141-residue protein sequence, read N- to C-terminus: Hemoglobin subunit alpha-1/2/3 (141 aa).

Positions 1 to 141 (VLSPADKTNV…VGTVLTSKYR (141 aa)) constitute a Globin domain. Residue Ser3 is modified to Phosphoserine. Lys7 carries the post-translational modification N6-succinyllysine. At Thr8 the chain carries Phosphothreonine. At Lys11 the chain carries N6-succinyllysine. Lys16 is subject to N6-acetyllysine; alternate. Lys16 carries the N6-succinyllysine; alternate modification. Residue Tyr24 is modified to Phosphotyrosine. Ser35 is subject to Phosphoserine. N6-succinyllysine is present on Lys40. Ser49 carries the post-translational modification Phosphoserine. His58 contacts O2. His87 serves as a coordination point for heme b. Ser102 carries the post-translational modification Phosphoserine. Position 108 is a phosphothreonine (Thr108). Residues Ser124 and Ser131 each carry the phosphoserine modification. A phosphothreonine mark is found at Thr134 and Thr137. The residue at position 138 (Ser138) is a Phosphoserine.

The protein belongs to the globin family. Heterotetramer of two alpha chains and two beta chains. Red blood cells.

Involved in oxygen transport from the lung to the various peripheral tissues. The protein is Hemoglobin subunit alpha-1/2/3 of Macaca nemestrina (Pig-tailed macaque).